The primary structure comprises 434 residues: Trigger factor (434 aa).

Residues 160-245 (DDKVKMNFIG…LTEVQAANLP (86 aa)) form the PPIase FKBP-type domain.

Belongs to the FKBP-type PPIase family. Tig subfamily.

It localises to the cytoplasm. It carries out the reaction [protein]-peptidylproline (omega=180) = [protein]-peptidylproline (omega=0). Involved in protein export. Acts as a chaperone by maintaining the newly synthesized protein in an open conformation. Functions as a peptidyl-prolyl cis-trans isomerase. In Shewanella frigidimarina (strain NCIMB 400), this protein is Trigger factor.